The chain runs to 668 residues: SH2 domain-containing protein B (668 aa).

Positions 373-411 are disordered; sequence SVSGSEESYQQCNSHPQTSRQFENGNGMRLHEEDNSSID. The segment covering 374–396 has biased composition (polar residues); that stretch reads VSGSEESYQQCNSHPQTSRQFEN. In terms of domain architecture, SH2 spans 574–642; sequence WIEGFITKEE…DNICESSERY (69 aa).

Phosphorylated on tyrosine residues. Expressed in roots, leaves, stems and flowers.

The sequence is that of SH2 domain-containing protein B from Arabidopsis thaliana (Mouse-ear cress).